Here is a 278-residue protein sequence, read N- to C-terminus: Large ribosomal subunit protein uL2 (278 aa).

Composition is skewed to basic residues over residues 210–220 (GRMRWKGKRPS) and 257–278 (TRRK…NKKR). Positions 210 to 278 (GRMRWKGKRP…VRRRKSNKKR (69 aa)) are disordered.

The protein belongs to the universal ribosomal protein uL2 family. Part of the 50S ribosomal subunit. Forms a bridge to the 30S subunit in the 70S ribosome.

Functionally, one of the primary rRNA binding proteins. Required for association of the 30S and 50S subunits to form the 70S ribosome, for tRNA binding and peptide bond formation. It has been suggested to have peptidyltransferase activity; this is somewhat controversial. Makes several contacts with the 16S rRNA in the 70S ribosome. The polypeptide is Large ribosomal subunit protein uL2 (Acidothermus cellulolyticus (strain ATCC 43068 / DSM 8971 / 11B)).